The chain runs to 162 residues: Scytalone dehydratase-like protein claB (162 aa).

Tyrosine 48 provides a ligand contact to substrate. Catalysis depends on residues histidine 83 and histidine 108.

It belongs to the scytalone dehydratase family.

It participates in pigment biosynthesis. Functionally, scytalone dehydratase-like protein; part of the gene cluster that mediates the biosynthesis of the bianthraquinone cladofulvin, a conidial pigment not required for virulence but that plays a role in fitness and resistance to environmental stresses including UV light and low-temperature stress. The pathway begins with the synthesis of atrochrysone thioester by the polyketide synthase (PKS) claG. The atrochrysone carboxyl ACP thioesterase claF then breaks the thioester bond and releases the atrochrysone carboxylic acid from claG. This compound is decarboxylated by claH to yield emodin, which is further converted to chrysophanol hydroquinone by the reductase claC and the dehydratase claB. The cytochrome P450 monooxygenase claM then catalyzes the dimerization of nataloe-emodin to cladofulvin. The sequence is that of Scytalone dehydratase-like protein claB from Passalora fulva (Tomato leaf mold).